A 260-amino-acid polypeptide reads, in one-letter code: tRNA1(Val) (adenine(37)-N6)-methyltransferase (260 aa).

It belongs to the methyltransferase superfamily. tRNA (adenine-N(6)-)-methyltransferase family.

The protein resides in the cytoplasm. The catalysed reaction is adenosine(37) in tRNA1(Val) + S-adenosyl-L-methionine = N(6)-methyladenosine(37) in tRNA1(Val) + S-adenosyl-L-homocysteine + H(+). Functionally, specifically methylates the adenine in position 37 of tRNA(1)(Val) (anticodon cmo5UAC). In Serratia proteamaculans (strain 568), this protein is tRNA1(Val) (adenine(37)-N6)-methyltransferase.